The following is a 2136-amino-acid chain: Methylcytosine dioxygenase TET1 (2136 aa).

Basic residues-rich tracts occupy residues 1 to 12 (MSRSRHARPSRL) and 20 to 31 (KKKKNSQLRKTT). The interval 1-47 (MSRSRHARPSRLVRKEDVNKKKKNSQLRKTTKGANKNVASVKTLSPG) is disordered. Polar residues predominate over residues 32-43 (KGANKNVASVKT). The segment at 528–674 (LGIAQLSQAG…NGPKSESMDY (147 aa)) is sufficient for binding to genomic CpG islands. The CXXC-type zinc-finger motif lies at 584 to 625 (EKKKRKRCGVCEPCQQKTNCGECTYCKNRKNSHQICKKRKCE). 8 residues coordinate Zn(2+): Cys-591, Cys-594, Cys-597, Cys-603, Cys-606, Cys-609, Cys-619, and Cys-624. 3 stretches are compositionally biased toward basic and acidic residues: residues 712–724 (QNKKSQLTDHVKG), 732–743 (EAEKSKNSEVDK), and 849–869 (IHNEGDQPKTPENIPSKEPKD). Disordered regions lie at residues 712–746 (QNKKSQLTDHVKGDFSANVPEAEKSKNSEVDKKRT), 849–876 (IHNEGDQPKTPENIPSKEPKDGSPVQPS), 899–923 (QLSEAPSENSSPSKSEKDEESEQRT), and 1119–1169 (EKGT…VSYQ). The residue at position 871 (Ser-871) is a Phosphoserine. A compositionally biased stretch (low complexity) spans 901 to 911 (SEAPSENSSPS). Residues 1119–1139 (EKGTIQQKPPSSVHNNHGSSL) show a composition bias toward polar residues. The segment covering 1146–1163 (TQKKTKSTPSRDRRKKKP) has biased composition (basic residues). Cys-1422, Cys-1424, Cys-1482, His-1508, and Cys-1510 together coordinate Zn(2+). Residue Arg-1551 participates in 2-oxoglutarate binding. Positions 1561, 1563, 1579, and 1588 each coordinate Zn(2+). An interaction with DNA region spans residues 1580 to 1593 (SWSMYFNGCKFGRS). A Glycyl lysine isopeptide (Lys-Gly) (interchain with G-Cter in ubiquitin) cross-link involves residue Lys-1589. Cys-1648 is a Zn(2+) binding site. Residue Cys-1664 participates in 2-oxoglutarate binding. His-1670 contributes to the Zn(2+) binding site. 2 residues coordinate Fe cation: His-1672 and Asp-1674. Asn-1677 is a substrate binding site. His-1706 provides a ligand contact to 2-oxoglutarate. Disordered stretches follow at residues 1774-1897 (EKKP…AAAD) and 1919-1984 (EPLI…SPAE). Residues 1786 to 1800 (NSTTTNNSKPSSLPT) show a composition bias toward low complexity. Composition is skewed to polar residues over residues 1824–1833 (SSDNTKTYSL) and 1937–1953 (HQPNHQPSFLTSPQDLA). Acidic residues predominate over residues 1957-1976 (MEEDEQHSEADEPPSDEPLS). His-2028 contacts Fe cation. 2043–2045 (RLS) lines the 2-oxoglutarate pocket. Substrate is bound at residue 2049-2051 (YQH). Residue His-2059 participates in Zn(2+) binding. Over residues 2074–2087 (KNKKMKASEQKDQA) the composition is skewed to basic and acidic residues. The interval 2074-2100 (KNKKMKASEQKDQAANEGPEQSSEVNE) is disordered.

This sequence belongs to the TET family. In terms of assembly, interacts with SIN3A; recruits the transcriptional corepressor SIN3A to gene promoters. Interacts with HCFC1. Interacts (via C-terminus) with OGT. Found in a complex composed of at least SINHCAF, SIN3A, HDAC1, SAP30, RBBP4, OGT and TET1. Interacts with QSER1. Interacts with NONO (via DNA-binding domain); this interaction recruits TET1 to genomic loci. Interacts with FOXA2; this interaction may recruit TET1 to specific enhancers to preserve their unmethylated status and hence allowing gene expression. Interacts with RNF2. Directly interacts (via C-terminus) with the DCAF1 component of the CRL4(VprBP) E3 ubiquitin-protein ligase complex. As to quaternary structure, interacts with UHRF1; this interaction induces the recruitment of TET1 to replicating heterochromatin. Interacts with DCAF1. Fe(2+) is required as a cofactor. Requires Zn(2+) as cofactor. Post-translationally, glycosylated. Interaction with OGT leads to GlcNAcylation. Monoubiquitinated at Lys-1589 by the DCX (DDB1-CUL4-X-box) E3 ubiquitin-protein ligase complex called CRL4(VprBP) or CUL4A-RBX1-DDB1-DCAF1/VPRBP complex; this modification promotes binding to DNA. As to expression, expressed in fetal heart, lung and brain, and in adult skeletal muscle, thymus and ovary. Not detected in adult heart, lung or brain. Up-regulated in glioblastoma cells (at protein level). In terms of tissue distribution, expressed in embryonic stem cells (at protein level).

It localises to the nucleus. It is found in the chromosome. It catalyses the reaction a 5-methyl-2'-deoxycytidine in DNA + 2-oxoglutarate + O2 = a 5-hydroxymethyl-2'-deoxycytidine in DNA + succinate + CO2. The catalysed reaction is a 5-hydroxymethyl-2'-deoxycytidine in DNA + 2-oxoglutarate + O2 = a 5-formyl-2'-deoxycytidine in DNA + succinate + CO2 + H2O. The enzyme catalyses a 5-formyl-2'-deoxycytidine in DNA + 2-oxoglutarate + O2 = a 5-carboxyl-2'-deoxycytidine in DNA + succinate + CO2 + H(+). Its function is as follows. Dioxygenase that plays a key role in active DNA demethylation, by catalyzing the sequential oxidation of the modified genomic base 5-methylcytosine (5mC) into 5-hydroxymethylcytosine (5hmC), 5-formylcytosine (5fC), and 5-carboxylcytosine (5caC). In addition to its role in DNA demethylation, plays a more general role in chromatin regulation by recruiting histone modifying protein complexes to alter histone marks and chromatin accessibility, leading to both activation and repression of gene expression. Plays therefore a role in many biological processes, including stem cell maintenance, T- and B-cell development, inflammation regulation, genomic imprinting, neural activity or DNA repair. Involved in the balance between pluripotency and lineage commitment of cells and plays a role in embryonic stem cells maintenance and inner cell mass cell specification. Together with QSER1, plays an essential role in the protection and maintenance of transcriptional and developmental programs to inhibit the binding of DNMT3A/3B and therefore de novo methylation. May play a role in pancreatic beta-cell specification during development. In this context, may function as an upstream epigenetic regulator of PAX4 presumably through direct recruitment by FOXA2 to a PAX4 enhancer to preserve its unmethylated status, thereby potentiating PAX4 expression to adopt beta-cell fate during endocrine lineage commitment. Under DNA hypomethylation conditions, such as in female meiotic germ cells, may induce epigenetic reprogramming of pericentromeric heterochromatin (PCH), the constitutive heterochromatin of pericentromeric regions. PCH forms chromocenters in the interphase nucleus and chromocenters cluster at the prophase of meiosis. In this context, may also be essential for chromocenter clustering in a catalytic activity-independent manner, possibly through the recruitment polycomb repressive complex 1 (PRC1) to the chromocenters. During embryonic development, may be required for normal meiotic progression in oocytes and meiotic gene activation. Binds preferentially to DNA containing cytidine-phosphate-guanosine (CpG) dinucleotides over CpH (H=A, T, and C), hemimethylated-CpG and hemimethylated-hydroxymethyl-CpG. Functionally, dioxygenase that plays a key role in active DNA demethylation. Binds to promoters, particularly to those with high CG content. In hippocampal neurons, isoform 1 regulates the expression of a unique subset of genes compared to isoform 2, although some overlap exists between both isoforms, hence differentially regulates excitatory synaptic transmission. In hippocampal neuron cell cultures, isoform 1 controls both miniature excitatory postsynaptic current amplitude and frequency. Isoform 1 may regulate genes involved in hippocampal-dependent memory, leading to positive regulation of memory, contrary to isoform 2 that may decrease memory. Dioxygenase that plays a key role in active DNA demethylation. As isoform 1, binds to promoters, particularly to those with high CG content, however displays reduced global chromatin affinity compared with isoform 1, leading to decreased global DNA demethylation compared with isoform 1. Contrary to isoform 1, isoform 2 localizes during S phase to sites of ongoing DNA replication in heterochromatin, causing a significant de novo 5hmC formation, globally, and more so in heterochromatin, including LINE 1 interspersed DNA repeats leading to their activation. In hippocampal neurons, isoform 2 regulates the expression of a unique subset of genes compared to isoform 1, although some overlap between both isoforms, hence differentially regulates excitatory synaptic transmission. In hippocampal neuron cell cultures, isoform 2 controls miniature excitatory postsynaptic current frequency, but not amplitude. Isoform 2 may regulate genes involved in hippocampal-dependent memory, leading to negative regulation of memory, contrary to isoform 1 that may improve memory. In immature and partially differentiated gonadotrope cells, directly represses luteinizing hormone gene LHB expression and does not catalyze 5hmC at the gene promoter. The polypeptide is Methylcytosine dioxygenase TET1 (Homo sapiens (Human)).